The chain runs to 303 residues: Geranylgeranyl pyrophosphate synthase (303 aa).

3 residues coordinate isopentenyl diphosphate: lysine 30, arginine 33, and histidine 62. The Mg(2+) site is built by aspartate 69 and aspartate 73. Arginine 78 is a dimethylallyl diphosphate binding site. Position 79 (arginine 79) interacts with isopentenyl diphosphate. Residues lysine 156, threonine 157, glutamine 190, lysine 207, and lysine 217 each contribute to the dimethylallyl diphosphate site.

The protein belongs to the FPP/GGPP synthase family. It depends on Mg(2+) as a cofactor.

It is found in the cytoplasm. The enzyme catalyses isopentenyl diphosphate + dimethylallyl diphosphate = (2E)-geranyl diphosphate + diphosphate. It catalyses the reaction isopentenyl diphosphate + (2E)-geranyl diphosphate = (2E,6E)-farnesyl diphosphate + diphosphate. The catalysed reaction is isopentenyl diphosphate + (2E,6E)-farnesyl diphosphate = (2E,6E,10E)-geranylgeranyl diphosphate + diphosphate. It participates in isoprenoid biosynthesis; farnesyl diphosphate biosynthesis; farnesyl diphosphate from geranyl diphosphate and isopentenyl diphosphate: step 1/1. The protein operates within isoprenoid biosynthesis; geranyl diphosphate biosynthesis; geranyl diphosphate from dimethylallyl diphosphate and isopentenyl diphosphate: step 1/1. Its pathway is isoprenoid biosynthesis; geranylgeranyl diphosphate biosynthesis; geranylgeranyl diphosphate from farnesyl diphosphate and isopentenyl diphosphate: step 1/1. In terms of biological role, catalyzes the trans-addition of the three molecules of IPP onto DMAPP to form geranylgeranyl pyrophosphate. This chain is Geranylgeranyl pyrophosphate synthase, found in Mucor circinelloides f. lusitanicus (Mucor racemosus var. lusitanicus).